Here is a 308-residue protein sequence, read N- to C-terminus: ADP-L-glycero-D-manno-heptose-6-epimerase (308 aa).

Residues 10 to 11 (FI), 31 to 32 (DN), Lys38, Lys53, 75 to 79 (EGACS), and Asn92 each bind NADP(+). Catalysis depends on Tyr139, which acts as the Proton acceptor. Lys143 is a binding site for NADP(+). Substrate is bound at residue Asn168. Residues Val169 and Lys177 each contribute to the NADP(+) site. Lys177 (proton acceptor) is an active-site residue. Substrate contacts are provided by residues Ser179, His186, 200–203 (FAGS), Arg208, and Tyr271.

Belongs to the NAD(P)-dependent epimerase/dehydratase family. HldD subfamily. As to quaternary structure, homopentamer. NADP(+) serves as cofactor.

It carries out the reaction ADP-D-glycero-beta-D-manno-heptose = ADP-L-glycero-beta-D-manno-heptose. The protein operates within nucleotide-sugar biosynthesis; ADP-L-glycero-beta-D-manno-heptose biosynthesis; ADP-L-glycero-beta-D-manno-heptose from D-glycero-beta-D-manno-heptose 7-phosphate: step 4/4. Catalyzes the interconversion between ADP-D-glycero-beta-D-manno-heptose and ADP-L-glycero-beta-D-manno-heptose via an epimerization at carbon 6 of the heptose. The sequence is that of ADP-L-glycero-D-manno-heptose-6-epimerase from Haemophilus influenzae (strain PittGG).